A 695-amino-acid polypeptide reads, in one-letter code: MTPIKKVIEYGDRSLVLETGCIARQASGAVVVRYGETVVLVTVVGMKEAAEGRDFFPLTVNYQERTYAAGKIPGGFFKREGRPTEKETLTSRLIDRPLRPLFPKNFINEVQVIATVISSDSENDPDIPSLIGASAALALSGIPFTTPIAAARVGYIDGQYVLNPTLGQMEKSALDLVVAGTEKAVLMVESEAQELPEEIMLGSVMFAHQEMQVVIQAIRELAEEAGKPAWDWKPPIEEEDLKSAVQEVGEARAQEAYQIRSKQERQASLAELRNSIVESLVPEENSRWSREQVLEAIGALEKRLVREQILSGGERIDGRDATAIRPINISTGLLPRTHGSALFTRGETQSLVATTLGTERDAQVIDAIEGERRERFMLHYNFPPYCVGETGFVGSPKRREIGHGRLAKRSLNGVVPDEESFPYVIRVVSEITESNGSSSMATVCGTSLSLMDAGVPIKAPVAGIAMGLIKEKDRFAVLSDILGDEDHLGDMDFKVAGTEKGITALQMDIKIDGITEEIMRTALSQAREGRFYILQKMNEIISTPRQEMSEYAPRMIVFKINPEKIRDVIGKGGATIRALTEETGTTIDIVDDGTVKIFSADKADGQEAKRRVEEIVSDVEVGKIYEGRVSRLMDFGAFVTILPGKDGLLHISQISAERVKNVSDKLSEGDVIRVKVLEVDKQGRVRLSVKAIGNE.

Mg(2+)-binding residues include Asp486 and Asp492. The KH domain maps to 553–612; the sequence is PRMIVFKINPEKIRDVIGKGGATIRALTEETGTTIDIVDDGTVKIFSADKADGQEAKRRV. The S1 motif domain maps to 622 to 690; that stretch reads GKIYEGRVSR…KQGRVRLSVK (69 aa).

Belongs to the polyribonucleotide nucleotidyltransferase family. As to quaternary structure, component of the RNA degradosome, which is a multiprotein complex involved in RNA processing and mRNA degradation. The cofactor is Mg(2+).

It localises to the cytoplasm. It carries out the reaction RNA(n+1) + phosphate = RNA(n) + a ribonucleoside 5'-diphosphate. Functionally, involved in mRNA degradation. Catalyzes the phosphorolysis of single-stranded polyribonucleotides processively in the 3'- to 5'-direction. The chain is Polyribonucleotide nucleotidyltransferase from Nitrosococcus oceani (strain ATCC 19707 / BCRC 17464 / JCM 30415 / NCIMB 11848 / C-107).